The primary structure comprises 334 residues: MNTEATHDQNEAQTTGVRLRNAREQLGLSQQAVAERLCLKVSTVRDIEEDKAPSDLASTFLRGYIRSYARLVHVPEEELLPGLEKQAPLRAAKVAPMQSFSLGKRRKKRDGWLMSFTWLVLFVVVGLTGAWWWQNHKAHQEEITTMADQSTAGLNADKDSGQSVPLDTGAVTSQDTTPAQTAPAPATPVDSTAATQTPAPTAAATQNTVVAPSQANVDTAATSAAPAATETPSALPTSQAGVAAPAADPNALVMNFTADCWLEVTDATGKRLFSGMQRKDGNLNLTGQAPYKLKIGAPAAVQIQYQGKPVDLSRFIRTNQVARLTLNAEPTPAQ.

Residues 1–111 are Cytoplasmic-facing; that stretch reads MNTEATHDQN…LGKRRKKRDG (111 aa). The HTH cro/C1-type domain maps to 19–71; the sequence is LRNAREQLGLSQQAVAERLCLKVSTVRDIEEDKAPSDLASTFLRGYIRSYARL. A DNA-binding region (H-T-H motif) is located at residues 30-49; sequence QQAVAERLCLKVSTVRDIEE. A helical; Signal-anchor for type II membrane protein membrane pass occupies residues 112–132; it reads WLMSFTWLVLFVVVGLTGAWW. At 133–334 the chain is on the periplasmic side; it reads WQNHKAHQEE…TLNAEPTPAQ (202 aa). A disordered region spans residues 152–210; that stretch reads AGLNADKDSGQSVPLDTGAVTSQDTTPAQTAPAPATPVDSTAATQTPAPTAAATQNTVV. Positions 161–175 are enriched in polar residues; it reads GQSVPLDTGAVTSQD. Over residues 176-210 the composition is skewed to low complexity; it reads TTPAQTAPAPATPVDSTAATQTPAPTAAATQNTVV.

It belongs to the RodZ family.

The protein resides in the cell inner membrane. Its function is as follows. Cytoskeletal protein that is involved in cell-shape control through regulation of the length of the long axis. The sequence is that of Cytoskeleton protein RodZ from Salmonella gallinarum (strain 287/91 / NCTC 13346).